The sequence spans 315 residues: Transposase for insertion sequence element IS640 (315 aa).

One can recognise an HTH IS21-type domain in the interval 5–66; it reads EDFYMIKQMR…PFMDYIDMRL (62 aa). Residues 111-285 form the Integrase catalytic domain; the sequence is FETQPGYQLQ…TPEQRSRWSR (175 aa).

This sequence belongs to the transposase IS21/IS408/IS1162 family.

In terms of biological role, involved in the transposition of the insertion sequence. This chain is Transposase for insertion sequence element IS640 (istA), found in Shigella sonnei.